Consider the following 1091-residue polypeptide: Protein JSN1 (1091 aa).

Disordered regions lie at residues 31 to 51 (EYEN…KLGS) and 75 to 131 (HHSK…GSLT). Polar residues predominate over residues 99 to 111 (TVASKTPRASPSR). The residue at position 129 (serine 129) is a Phosphoserine. A Phosphothreonine modification is found at threonine 131. Phosphoserine is present on residues serine 160 and serine 168. The region spanning 340–426 (NTISISNVFP…APSKISFAKI (87 aa)) is the RRM domain. 2 stretches are compositionally biased toward low complexity: residues 482–494 (QQSQ…NHSS) and 507–520 (NNNN…NNSA). 2 disordered regions span residues 482 to 534 (QQSQ…PPPN) and 568 to 591 (HKGT…EFDP). Positions 557 to 913 (QINSLIKKSL…RLLEEVGLAS (357 aa)) constitute a PUM-HD domain. The span at 568–577 (HKGTSDTQNF) shows a compositional bias: polar residues. Pumilio repeat units lie at residues 617–652 (AMLD…IMLR), 653–689 (KTSK…QVTQ), 690–724 (GVKD…FIFE), 725–760 (SIIA…QSIV), and 801–837 (RLTK…IILD). Residues 911 to 981 (LASPSSTHNK…GSSASTLSPG (71 aa)) form a disordered region. The residue at position 913 (serine 913) is a Phosphoserine. 2 stretches are compositionally biased toward low complexity: residues 915 to 935 (SSTH…SISH) and 951 to 979 (SVSS…STLS).

This is Protein JSN1 (JSN1) from Saccharomyces cerevisiae (strain ATCC 204508 / S288c) (Baker's yeast).